A 381-amino-acid polypeptide reads, in one-letter code: Alcohol dehydrogenase class-3 (381 aa).

Cys-49 is a binding site for Zn(2+). His-50 contacts NAD(+). An alcohol is bound by residues Thr-51 and His-71. The Zn(2+) site is built by His-71, Glu-72, Cys-101, Cys-104, Cys-107, Cys-115, and Cys-179. NAD(+)-binding positions include 204-209 (GLGTVG), Asp-228, Lys-233, Ile-274, 297-299 (VGV), 322-324 (TAF), and Arg-374.

The protein belongs to the zinc-containing alcohol dehydrogenase family. Class-III subfamily. In terms of assembly, homodimer. Requires Zn(2+) as cofactor.

The protein localises to the cytoplasm. The enzyme catalyses a primary alcohol + NAD(+) = an aldehyde + NADH + H(+). It catalyses the reaction a secondary alcohol + NAD(+) = a ketone + NADH + H(+). The catalysed reaction is S-(hydroxymethyl)glutathione + NADP(+) = S-formylglutathione + NADPH + H(+). It carries out the reaction S-(hydroxymethyl)glutathione + NAD(+) = S-formylglutathione + NADH + H(+). The chain is Alcohol dehydrogenase class-3 from Oryza sativa subsp. japonica (Rice).